A 174-amino-acid chain; its full sequence is uncharacterized protein (174 aa).

The protein belongs to the IIV-6 196R family.

This is an uncharacterized protein from Acheta domesticus (House cricket).